The following is a 472-amino-acid chain: Trigger factor (472 aa).

The PPIase FKBP-type domain maps to 174–261 (GDIALVSFKG…LEDLKIKELP (88 aa)). Residues 433–472 (NNTVVEKPPEKARDQIKEKSSKKKTTKTNKEKKSSKTPKS) form a disordered region. Residues 439-451 (KPPEKARDQIKEK) are compositionally biased toward basic and acidic residues.

Belongs to the FKBP-type PPIase family. Tig subfamily.

It is found in the cytoplasm. It carries out the reaction [protein]-peptidylproline (omega=180) = [protein]-peptidylproline (omega=0). Involved in protein export. Acts as a chaperone by maintaining the newly synthesized protein in an open conformation. Functions as a peptidyl-prolyl cis-trans isomerase. The sequence is that of Trigger factor from Prochlorococcus marinus (strain NATL1A).